Reading from the N-terminus, the 493-residue chain is Na(+)/H(+) antiporter subunit D (493 aa).

Transmembrane regions (helical) follow at residues 3–23 (NFVI…IFMT), 31–51 (IFST…VQTV), 77–97 (FASL…LYSF), 107–127 (SFYY…FLTG), 129–149 (LFNM…LIVL), 163–183 (IVFN…LYAV), 203–223 (GLIT…GGIF), 227–247 (FWLP…FGAL), 251–271 (VGLY…TAFT), 274–294 (LMIW…LAYS), 299–319 (IVIY…AVHT), 330–350 (LIHD…LIAL), 370–390 (GWMF…SGFV), 407–427 (ISML…RIFI), and 449–469 (LYPA…TEWV).

The protein belongs to the CPA3 antiporters (TC 2.A.63) subunit D family. In terms of assembly, forms a heterooligomeric complex that consists of seven subunits: MrpA, MrpB, MrpC, MrpD, MrpE, MrpF and MrpG.

Its subcellular location is the cell membrane. Mrp complex is a Na(+)/H(+) antiporter that is considered to be the major Na(+) excretion system in B.subtilis. Has a major role in Na(+) resistance and a minor role in Na(+)- and K(+)-dependent pH homeostasis as compared to TetB. MrpA may be the actual Na(+)/H(+) antiporter, although the six other Mrp proteins are all required for Na(+)/H(+) antiport activity and Na(+) resistance. MrpA is required for initiation of sporulation when external Na(+) concentration increases. Also transports Li(+) but not K(+), Ca(2+) or Mg(2+). This is Na(+)/H(+) antiporter subunit D (mrpD) from Bacillus subtilis (strain 168).